The chain runs to 193 residues: Phosphoheptose isomerase (193 aa).

The SIS domain maps to 37 to 193; it reads LADSFKVGGK…QLIEKEMVKA (157 aa). 52–54 provides a ligand contact to substrate; it reads NGG. Residues H61 and E65 each coordinate Zn(2+). Substrate contacts are provided by residues E65, 93–94, 119–121, S124, and Q172; these read ND and STS. Zn(2+) contacts are provided by Q172 and H180.

It belongs to the SIS family. GmhA subfamily. As to quaternary structure, homotetramer. It depends on Zn(2+) as a cofactor.

Its subcellular location is the cytoplasm. It carries out the reaction 2 D-sedoheptulose 7-phosphate = D-glycero-alpha-D-manno-heptose 7-phosphate + D-glycero-beta-D-manno-heptose 7-phosphate. It functions in the pathway carbohydrate biosynthesis; D-glycero-D-manno-heptose 7-phosphate biosynthesis; D-glycero-alpha-D-manno-heptose 7-phosphate and D-glycero-beta-D-manno-heptose 7-phosphate from sedoheptulose 7-phosphate: step 1/1. The protein operates within bacterial outer membrane biogenesis; LPS core biosynthesis. Catalyzes the isomerization of sedoheptulose 7-phosphate in D-glycero-D-manno-heptose 7-phosphate. The protein is Phosphoheptose isomerase of Photorhabdus laumondii subsp. laumondii (strain DSM 15139 / CIP 105565 / TT01) (Photorhabdus luminescens subsp. laumondii).